Consider the following 330-residue polypeptide: Probable cytosolic iron-sulfur protein assembly protein 1 (330 aa).

7 WD repeats span residues 12-49 (LYKE…FTLI), 56-95 (AHKK…DRTF), 105-144 (GHEN…EEYE), 151-190 (EHSQ…WECV), 195-236 (GHEG…EDDQ), 248-286 (VHKR…WKVF), and 292-330 (CHGV…EKAA).

It belongs to the WD repeat CIA1 family. In terms of assembly, interacts with NAR1.

The protein resides in the cytoplasm. It localises to the nucleus. Functionally, essential component of the cytosolic iron-sulfur (Fe/S) protein assembly machinery. Required for the maturation of extramitochondrial Fe/S proteins. This is Probable cytosolic iron-sulfur protein assembly protein 1 from Saccharomyces cerevisiae (strain YJM789) (Baker's yeast).